Here is a 341-residue protein sequence, read N- to C-terminus: Phosphate acyltransferase (341 aa).

It belongs to the PlsX family. In terms of assembly, homodimer. Probably interacts with PlsY.

The protein localises to the cytoplasm. It carries out the reaction a fatty acyl-[ACP] + phosphate = an acyl phosphate + holo-[ACP]. Its pathway is lipid metabolism; phospholipid metabolism. Its function is as follows. Catalyzes the reversible formation of acyl-phosphate (acyl-PO(4)) from acyl-[acyl-carrier-protein] (acyl-ACP). This enzyme utilizes acyl-ACP as fatty acyl donor, but not acyl-CoA. In Elusimicrobium minutum (strain Pei191), this protein is Phosphate acyltransferase.